Consider the following 40-residue polypeptide: Biotin carboxylase (40 aa).

The 40-residue stretch at 1–40 (ILVANRGEIAVRLLEEAPSPALTPELRITAYLPSGGPFVR) folds into the Biotin carboxylation domain. Positions 13–27 (LLEEAPSPALTPELR) constitute an ATP-grasp domain.

Acetyl-CoA carboxylase is a heterohexamer of biotin carboxyl carrier protein, biotin carboxylase and the two subunits of carboxyl transferase in a 2:2 complex. Mg(2+) serves as cofactor. Mn(2+) is required as a cofactor.

It carries out the reaction N(6)-biotinyl-L-lysyl-[protein] + hydrogencarbonate + ATP = N(6)-carboxybiotinyl-L-lysyl-[protein] + ADP + phosphate + H(+). It participates in lipid metabolism; malonyl-CoA biosynthesis; malonyl-CoA from acetyl-CoA: step 1/1. Functionally, this protein is a component of the acetyl coenzyme A carboxylase complex; first, biotin carboxylase catalyzes the carboxylation of the carrier protein and then the transcarboxylase transfers the carboxyl group to form malonyl-CoA. The sequence is that of Biotin carboxylase from Populus euphratica (Euphrates poplar).